The primary structure comprises 616 residues: Dihydroxy-acid dehydratase (616 aa).

Position 81 (Asp81) interacts with Mg(2+). A [2Fe-2S] cluster-binding site is contributed by Cys122. Mg(2+)-binding residues include Asp123 and Lys124. Position 124 is an N6-carboxylysine (Lys124). Residue Cys195 participates in [2Fe-2S] cluster binding. Glu491 is a Mg(2+) binding site. The Proton acceptor role is filled by Ser517.

It belongs to the IlvD/Edd family. In terms of assembly, homodimer. It depends on [2Fe-2S] cluster as a cofactor. Mg(2+) serves as cofactor.

It catalyses the reaction (2R)-2,3-dihydroxy-3-methylbutanoate = 3-methyl-2-oxobutanoate + H2O. The catalysed reaction is (2R,3R)-2,3-dihydroxy-3-methylpentanoate = (S)-3-methyl-2-oxopentanoate + H2O. Its pathway is amino-acid biosynthesis; L-isoleucine biosynthesis; L-isoleucine from 2-oxobutanoate: step 3/4. It functions in the pathway amino-acid biosynthesis; L-valine biosynthesis; L-valine from pyruvate: step 3/4. Functionally, functions in the biosynthesis of branched-chain amino acids. Catalyzes the dehydration of (2R,3R)-2,3-dihydroxy-3-methylpentanoate (2,3-dihydroxy-3-methylvalerate) into 2-oxo-3-methylpentanoate (2-oxo-3-methylvalerate) and of (2R)-2,3-dihydroxy-3-methylbutanoate (2,3-dihydroxyisovalerate) into 2-oxo-3-methylbutanoate (2-oxoisovalerate), the penultimate precursor to L-isoleucine and L-valine, respectively. This is Dihydroxy-acid dehydratase from Salmonella heidelberg (strain SL476).